The primary structure comprises 2309 residues: Collagen alpha-4(VI) chain (2309 aa).

Positions 1 to 22 are cleaved as a signal peptide; that stretch reads MGTWKTFWLIISLAAGLGFVKS. The nonhelical region stretch occupies residues 21–1410; sequence KSQRIVCREA…TCCNMYAKCY (1390 aa). VWFA domains follow at residues 34-206, 235-413, 430-653, 634-811, 849-1018, and 1030-1199; these read DIVF…AQKL, DIVF…LQAL, DVVF…FQRV, DLVF…GNKL, DIYF…IRDI, and DIIF…EKEI. A glycan (N-linked (GlcNAc...) asparagine) is linked at Asn188. Asn754 is a glycosylation site (N-linked (GlcNAc...) asparagine). An N-linked (GlcNAc...) asparagine glycan is attached at Asn1114. The triple-helical region stretch occupies residues 1411–1744; the sequence is GDDGIRGEPG…GKMGTKGSKG (334 aa). Residues 1414 to 1430 show a composition bias toward basic and acidic residues; it reads GIRGEPGSRGEQGERGL. The interval 1414-1746 is disordered; sequence GIRGEPGSRG…MGTKGSKGLA (333 aa). Over residues 1480-1489 the composition is skewed to gly residues; sequence GEEGVGGLDG. The Cell attachment site signature appears at 1527–1529; it reads RGD. Low complexity-rich tracts occupy residues 1605–1621 and 1650–1669; these read PRGRQGPPGFFGQKGDP and PAGERGPRGQQGPRGQPGLF. The nonhelical region stretch occupies residues 1745–2309; the sequence is LADRTPCEIV…EGECLNYVLK (565 aa). VWFA domains are found at residues 1776 to 1957 and 1982 to 2187; these read EVVF…ASCT and DLVF…LNLL. A Cell attachment site motif is present at residues 2208 to 2210; the sequence is RGD. A disordered region spans residues 2262–2300; the sequence is ALGSHGKDRADTEDIDQETPAKGRHLGPTHGPCPMGPEE.

It belongs to the type VI collagen family. In terms of assembly, trimers composed of three different chains: alpha-1(VI), alpha-2(VI), and alpha-3(VI) or alpha-4(VI) or alpha-5(VI) or alpha-6(VI). Prolines at the third position of the tripeptide repeating unit (G-X-Y) are hydroxylated in some or all of the chains. As to expression, in newborn, it is expressed in lung, kidney, brain, intestine, skin, sternum and, at weak level, calvaria. In adult, it is almost absent with some weak expression in ovary and very weak expression in spleen, lung, uterus and brain.

Its subcellular location is the secreted. It is found in the extracellular space. It localises to the extracellular matrix. Functionally, collagen VI acts as a cell-binding protein. This chain is Collagen alpha-4(VI) chain (Col6a4), found in Mus musculus (Mouse).